The following is a 399-amino-acid chain: Methylthioribose kinase (399 aa).

ATP is bound by residues Asn-40, Lys-57, and 111–113 (EDL). Asp-229 is a binding site for substrate. 246–248 (DAE) contacts ATP. Residue Arg-344 participates in substrate binding.

It belongs to the methylthioribose kinase family. Homodimer.

It carries out the reaction 5-(methylsulfanyl)-D-ribose + ATP = 5-(methylsulfanyl)-alpha-D-ribose 1-phosphate + ADP + H(+). It functions in the pathway amino-acid biosynthesis; L-methionine biosynthesis via salvage pathway; S-methyl-5-thio-alpha-D-ribose 1-phosphate from S-methyl-5'-thioadenosine (hydrolase route): step 2/2. In terms of biological role, catalyzes the phosphorylation of methylthioribose into methylthioribose-1-phosphate. The sequence is that of Methylthioribose kinase from Citrobacter koseri (strain ATCC BAA-895 / CDC 4225-83 / SGSC4696).